A 244-amino-acid chain; its full sequence is ATP synthase subunit a (244 aa).

Helical transmembrane passes span 25–45 (ISFT…LLIF), 85–105 (YFAF…FGMI), 115–135 (IIVT…IGFM), 144–164 (LFVP…IEII), 193–213 (GFVI…SVAL), and 216–236 (LEIL…CIYL).

It belongs to the ATPase A chain family. As to quaternary structure, F-type ATPases have 2 components, CF(1) - the catalytic core - and CF(0) - the membrane proton channel. CF(1) has five subunits: alpha(3), beta(3), gamma(1), delta(1), epsilon(1). CF(0) has three main subunits: a(1), b(2) and c(9-12). The alpha and beta chains form an alternating ring which encloses part of the gamma chain. CF(1) is attached to CF(0) by a central stalk formed by the gamma and epsilon chains, while a peripheral stalk is formed by the delta and b chains.

The protein resides in the cell inner membrane. Functionally, key component of the proton channel; it plays a direct role in the translocation of protons across the membrane. In Pelagibacter ubique (strain HTCC1062), this protein is ATP synthase subunit a.